A 69-amino-acid polypeptide reads, in one-letter code: Neurotoxin Cex3 (69 aa).

Residue A1 is a signal peptide. The region spanning 2–67 (KDGYLVNKST…TYPLPNKSCG (66 aa)) is the LCN-type CS-alpha/beta domain. 4 cysteine pairs are disulfide-bonded: C13-C66, C17-C42, C26-C47, and C30-C49. Residue C66 is modified to Cysteine amide. The propeptide occupies 67 to 69 (GRK).

Belongs to the long (4 C-C) scorpion toxin superfamily. Sodium channel inhibitor family. Beta subfamily. In terms of tissue distribution, expressed by the venom gland.

Its subcellular location is the secreted. Beta toxins bind voltage-independently at site-4 of sodium channels (Nav) and shift the voltage of activation toward more negative potentials thereby affecting sodium channel activation and promoting spontaneous and repetitive firing. This is Neurotoxin Cex3 from Centruroides exilicauda (Bark scorpion).